Reading from the N-terminus, the 128-residue chain is Ribosome-binding factor A (128 aa).

This sequence belongs to the RbfA family. Monomer. Binds 30S ribosomal subunits, but not 50S ribosomal subunits or 70S ribosomes.

The protein localises to the cytoplasm. Functionally, one of several proteins that assist in the late maturation steps of the functional core of the 30S ribosomal subunit. Associates with free 30S ribosomal subunits (but not with 30S subunits that are part of 70S ribosomes or polysomes). Required for efficient processing of 16S rRNA. May interact with the 5'-terminal helix region of 16S rRNA. The polypeptide is Ribosome-binding factor A (Geobacillus thermodenitrificans (strain NG80-2)).